Here is a 169-residue protein sequence, read N- to C-terminus: Sec-independent protein translocase protein TatB (169 aa).

Residues 1–21 (MFDIGFLELAVIAVIGLIVIG) form a helical membrane-spanning segment. The disordered stretch occupies residues 98–169 (EAEEAKLQTP…TTKTEPANDR (72 aa)). A compositionally biased stretch (basic and acidic residues) spans 134 to 143 (PPEEPSKVEA). Residues 146–169 (SAETPQANNQDQQPTTKTEPANDR) are compositionally biased toward polar residues.

This sequence belongs to the TatB family. In terms of assembly, the Tat system comprises two distinct complexes: a TatABC complex, containing multiple copies of TatA, TatB and TatC subunits, and a separate TatA complex, containing only TatA subunits. Substrates initially bind to the TatABC complex, which probably triggers association of the separate TatA complex to form the active translocon.

It localises to the cell inner membrane. Part of the twin-arginine translocation (Tat) system that transports large folded proteins containing a characteristic twin-arginine motif in their signal peptide across membranes. Together with TatC, TatB is part of a receptor directly interacting with Tat signal peptides. TatB may form an oligomeric binding site that transiently accommodates folded Tat precursor proteins before their translocation. The chain is Sec-independent protein translocase protein TatB from Saccharophagus degradans (strain 2-40 / ATCC 43961 / DSM 17024).